The following is a 148-amino-acid chain: uncharacterized protein (148 aa).

This is an uncharacterized protein from Saccharomyces cerevisiae (strain ATCC 204508 / S288c) (Baker's yeast).